The following is a 203-amino-acid chain: A-type ATP synthase subunit E (203 aa).

This sequence belongs to the V-ATPase E subunit family. As to quaternary structure, might form a homodimer. Interacts with subunit H via residues 41-60. The A-type ATPase is composed of subunits A(3), B(3), C, D, E(1 or 2), F, H(2), I and K(x).

It is found in the cell membrane. Functionally, component of the A-type ATP synthase that produces ATP from ADP in the presence of a proton gradient across the membrane. This chain is A-type ATP synthase subunit E, found in Methanocaldococcus jannaschii (strain ATCC 43067 / DSM 2661 / JAL-1 / JCM 10045 / NBRC 100440) (Methanococcus jannaschii).